The following is a 550-amino-acid chain: Acidic amino acid decarboxylase GADL1 (550 aa).

Lysine 362 carries the post-translational modification N6-(pyridoxal phosphate)lysine.

It belongs to the group II decarboxylase family. In terms of assembly, homodimer. Pyridoxal 5'-phosphate serves as cofactor. Expressed in skeletal muscles and kidney (at protein level). Expressed in skeletal muscle and weakly in brain. Not expressed in liver or kidney. Expressed in brain, olfactory bulb, liver, muscle and kidney with the highest expression in olfactory bulb and almost not detected in liver (at protein level).

It catalyses the reaction L-aspartate + H(+) = beta-alanine + CO2. It carries out the reaction 3-sulfino-L-alanine + H(+) = hypotaurine + CO2. The catalysed reaction is L-cysteate + H(+) = taurine + CO2. Activated weakly by 0.2-0.4 mM Li(+). Inhibited by bis-carboxymethyl-trithiocarbonate, ethylxanthogenacetic acid and 2,5-disulfoaniline. Its function is as follows. Catalyzes the decarboxylation of L-aspartate, 3-sulfino-L-alanine (cysteine sulfinic acid), and L-cysteate to beta-alanine, hypotaurine and taurine, respectively. The preferred substrate is L-aspartate. Does not exhibit any decarboxylation activity toward glutamate. The sequence is that of Acidic amino acid decarboxylase GADL1 from Mus musculus (Mouse).